The chain runs to 439 residues: Transcription factor pydF (439 aa).

The segment covering 1–18 has biased composition (basic and acidic residues); the sequence is MGRPQRADKQRRETDGPQ. Disordered regions lie at residues 1–53, 143–177, and 239–262; these read MGRP…GYAR, HVEKATAERPGNDGSSSPSSSLLRTSSSPSQQAVE, and AFRDGQNNGTSRPNTAASQNMQQH. Residues 20-35 show a composition bias toward polar residues; that stretch reads SRPSLTQAQKNSTTIR. Positions 143–153 are enriched in basic and acidic residues; the sequence is HVEKATAERPG. Residues 157-172 show a composition bias toward low complexity; it reads SSSPSSSLLRTSSSPS. Residues 243 to 260 are compositionally biased toward polar residues; the sequence is GQNNGTSRPNTAASQNMQ.

The protein resides in the nucleus. Functionally, transcription factor; part of the gene cluster that mediates the biosynthesis of pyrrocidines, fungal natural products containing a macrocyclic para-cyclophane connected to a decahydrofluorene ring system that show potent antibiotic activities toward Gram-negative bacteria. This Acremonium sp protein is Transcription factor pydF.